Reading from the N-terminus, the 440-residue chain is Trigger factor (440 aa).

In terms of domain architecture, PPIase FKBP-type spans 160 to 253 (KDTVIGDALR…VTEVKRLELP (94 aa)).

This sequence belongs to the FKBP-type PPIase family. Tig subfamily.

It localises to the cytoplasm. The enzyme catalyses [protein]-peptidylproline (omega=180) = [protein]-peptidylproline (omega=0). Its function is as follows. Involved in protein export. Acts as a chaperone by maintaining the newly synthesized protein in an open conformation. Functions as a peptidyl-prolyl cis-trans isomerase. The protein is Trigger factor of Chlorobium chlorochromatii (strain CaD3).